The following is a 405-amino-acid chain: MNASGSAPLGANSEVGQLRAVLLHRPGDELKRLTPRNNDQLLFDGLPWVDRAQEEHDAFADLLRSRGVEVLLLSDLLAETLGASGAARIQGIGAAVDPRKLGHTLAQELAAHLRGVPAPELSTILTAGMTFDELPVAANTASLVRRMHHGGDFVIDPLPNLLFTRDSSFWIGPRVAITSLALPARVRETSLTDIIYAHHPRFRGARRAYESHTAPVEGGDVLLLAPGVVAVGVGERTTPAGAEALARSVFEDELAHTVLVVPIAQARASMHLDTVCTMVDHDAVVMYPIIQDTLSAFTIHREDNGVSIRGADPFLSAAAEAMGIGKLRVIDTGLDNVTAEREQWDDGNNTLALAPGVVVAYERNVETNARLEASGIEVLRIAGSELGSGRGGPRCMSCPVARDPL.

The Amidino-cysteine intermediate role is filled by Cys395.

The protein belongs to the arginine deiminase family.

It localises to the cytoplasm. The catalysed reaction is L-arginine + H2O = L-citrulline + NH4(+). It functions in the pathway amino-acid degradation; L-arginine degradation via ADI pathway; carbamoyl phosphate from L-arginine: step 1/2. The protein is Arginine deiminase of Rhodococcus opacus (strain B4).